An 882-amino-acid polypeptide reads, in one-letter code: Alanine--tRNA ligase (882 aa).

Zn(2+) contacts are provided by histidine 567, histidine 571, cysteine 669, and histidine 673.

Belongs to the class-II aminoacyl-tRNA synthetase family. It depends on Zn(2+) as a cofactor.

Its subcellular location is the cytoplasm. The enzyme catalyses tRNA(Ala) + L-alanine + ATP = L-alanyl-tRNA(Ala) + AMP + diphosphate. In terms of biological role, catalyzes the attachment of alanine to tRNA(Ala) in a two-step reaction: alanine is first activated by ATP to form Ala-AMP and then transferred to the acceptor end of tRNA(Ala). Also edits incorrectly charged Ser-tRNA(Ala) and Gly-tRNA(Ala) via its editing domain. The sequence is that of Alanine--tRNA ligase from Thermosynechococcus vestitus (strain NIES-2133 / IAM M-273 / BP-1).